A 161-amino-acid chain; its full sequence is Nucleotide-binding protein mma_0840 (161 aa).

Belongs to the YajQ family.

Its function is as follows. Nucleotide-binding protein. The sequence is that of Nucleotide-binding protein mma_0840 from Janthinobacterium sp. (strain Marseille) (Minibacterium massiliensis).